A 191-amino-acid chain; its full sequence is Prostaglandin-H2 D-isomerase (191 aa).

The N-terminal stretch at 1-28 is a signal peptide; sequence MATPNRLWMALLLLGVLGVLQTPAPAQA. N-linked (GlcNAc...) asparagine glycosylation is present at Asn51. Cys65 serves as the catalytic Nucleophile. The N-linked (GlcNAc...) asparagine glycan is linked to Asn78. Cysteines 89 and 186 form a disulfide.

The protein belongs to the calycin superfamily. Lipocalin family. As to quaternary structure, monomer. As to expression, in the male reproductive system, expressed in the testis, epididymis and prostate, and secreted into the seminal fluid.

Its subcellular location is the rough endoplasmic reticulum. The protein resides in the nucleus membrane. The protein localises to the golgi apparatus. It is found in the cytoplasm. It localises to the perinuclear region. Its subcellular location is the secreted. It catalyses the reaction prostaglandin H2 = prostaglandin D2. Catalyzes the conversion of PGH2 to PGD2, a prostaglandin involved in smooth muscle contraction/relaxation and a potent inhibitor of platelet aggregation. Involved in a variety of CNS functions, such as sedation, NREM sleep and PGE2-induced allodynia, and may have an anti-apoptotic role in oligodendrocytes. Binds small non-substrate lipophilic molecules, including biliverdin, bilirubin, retinal, retinoic acid and thyroid hormone, and may act as a scavenger for harmful hydrophobic molecules and as a secretory retinoid and thyroid hormone transporter. Possibly involved in development and maintenance of the blood-brain, blood-retina, blood-aqueous humor and blood-testis barrier. It is likely to play important roles in both maturation and maintenance of the central nervous system and male reproductive system. Involved in PLA2G3-dependent maturation of mast cells. PLA2G3 is secreted by immature mast cells and acts on nearby fibroblasts upstream to PTDGS to synthesize PGD2, which in turn promotes mast cell maturation and degranulation via PTGDR. This Bos taurus (Bovine) protein is Prostaglandin-H2 D-isomerase (PTGDS).